The sequence spans 142 residues: Alpha-lactalbumin (142 aa).

An N-terminal signal peptide occupies residues 1–19; it reads MMSFVSLLLVGILFHATQA. Residues 20–142 form the C-type lysozyme domain; sequence EQLTKCEVFQ…KLDQWLCEKL (123 aa). 4 disulfide bridges follow: C25/C139, C47/C130, C80/C96, and C92/C110. N64 and N93 each carry an N-linked (GlcNAc...) asparagine glycan. Ca(2+) is bound by residues K98, D101, D103, D106, and D107.

This sequence belongs to the glycosyl hydrolase 22 family. Lactose synthase (LS) is a heterodimer of a catalytic component, beta1,4-galactosyltransferase (beta4Gal-T1) and a regulatory component, alpha-lactalbumin (LA). In terms of tissue distribution, mammary gland specific. Secreted in milk.

The protein resides in the secreted. In terms of biological role, regulatory subunit of lactose synthase, changes the substrate specificity of galactosyltransferase in the mammary gland making glucose a good acceptor substrate for this enzyme. This enables LS to synthesize lactose, the major carbohydrate component of milk. In other tissues, galactosyltransferase transfers galactose onto the N-acetylglucosamine of the oligosaccharide chains in glycoproteins. This is Alpha-lactalbumin (LALBA) from Ovis aries (Sheep).